Reading from the N-terminus, the 54-residue chain is Ovomucoid (54 aa).

The Kazal-like domain maps to 4 to 54 (VDCSDYPKPVCSLEDMPLCGSDSKTYSNKCNFCNAVVDSNGTLTLSHFGKC). 3 disulfide bridges follow: Cys6-Cys36, Cys14-Cys33, and Cys22-Cys54. An N-linked (GlcNAc...) asparagine glycan is attached at Asn43.

The protein resides in the secreted. This Vultur gryphus (Andean condor) protein is Ovomucoid.